We begin with the raw amino-acid sequence, 140 residues long: MTKQRTLSIIKPDAVEKNVIGEIYSRFEKAGLRIIAAKMKHLSKAEAEGFYAVHKDRPFFSALVEFMISGPVMIQVLEGENAIAKNRELMGATNPKEAKAGTIRADFADSIDANAVHGSDAEDTAAQEIRYFFSDTEIFG.

K11, F59, R87, T93, R104, and N114 together coordinate ATP. H117 serves as the catalytic Pros-phosphohistidine intermediate.

It belongs to the NDK family. As to quaternary structure, homotetramer. The cofactor is Mg(2+).

It localises to the cytoplasm. The catalysed reaction is a 2'-deoxyribonucleoside 5'-diphosphate + ATP = a 2'-deoxyribonucleoside 5'-triphosphate + ADP. It catalyses the reaction a ribonucleoside 5'-diphosphate + ATP = a ribonucleoside 5'-triphosphate + ADP. In terms of biological role, major role in the synthesis of nucleoside triphosphates other than ATP. The ATP gamma phosphate is transferred to the NDP beta phosphate via a ping-pong mechanism, using a phosphorylated active-site intermediate. The chain is Nucleoside diphosphate kinase from Francisella tularensis subsp. holarctica (strain LVS).